Here is a 465-residue protein sequence, read N- to C-terminus: GTPase Der (465 aa).

2 consecutive EngA-type G domains span residues 27-190 (PVLA…PEAP) and 202-375 (RRIA…AGWE). Residues 33 to 40 (GRPNVGKS), 80 to 84 (DTGGW), 142 to 145 (NKVD), 208 to 215 (GRPNVGKS), 255 to 259 (DTAGI), and 320 to 323 (NKWD) contribute to the GTP site. Residues 376-458 (TRVPTGRLNA…PIHISVRVRE (83 aa)) form the KH-like domain.

The protein belongs to the TRAFAC class TrmE-Era-EngA-EngB-Septin-like GTPase superfamily. EngA (Der) GTPase family. As to quaternary structure, associates with the 50S ribosomal subunit.

Its function is as follows. GTPase that plays an essential role in the late steps of ribosome biogenesis. This is GTPase Der from Streptomyces coelicolor (strain ATCC BAA-471 / A3(2) / M145).